The following is a 248-amino-acid chain: Phosphoribosyl isomerase A (248 aa).

The Proton acceptor role is filled by Asp14. Asp133 (proton donor) is an active-site residue.

Belongs to the HisA/HisF family.

The protein localises to the cytoplasm. It carries out the reaction 1-(5-phospho-beta-D-ribosyl)-5-[(5-phospho-beta-D-ribosylamino)methylideneamino]imidazole-4-carboxamide = 5-[(5-phospho-1-deoxy-D-ribulos-1-ylimino)methylamino]-1-(5-phospho-beta-D-ribosyl)imidazole-4-carboxamide. The enzyme catalyses N-(5-phospho-beta-D-ribosyl)anthranilate = 1-(2-carboxyphenylamino)-1-deoxy-D-ribulose 5-phosphate. It functions in the pathway amino-acid biosynthesis; L-histidine biosynthesis; L-histidine from 5-phospho-alpha-D-ribose 1-diphosphate: step 4/9. It participates in amino-acid biosynthesis; L-tryptophan biosynthesis; L-tryptophan from chorismate: step 3/5. In terms of biological role, involved in both the histidine and tryptophan biosynthetic pathways. The polypeptide is Phosphoribosyl isomerase A (Mycobacterium sp. (strain JLS)).